Consider the following 676-residue polypeptide: Transketolase 7 (676 aa).

Substrate is bound at residue His36. Residues His76 and 125–127 (GPL) each bind thiamine diphosphate. Asp166 contacts Mg(2+). Thiamine diphosphate contacts are provided by Gly167 and Asn196. Asn196 and Ile198 together coordinate Mg(2+). His273, Arg367, and Ser394 together coordinate substrate. Residue His273 coordinates thiamine diphosphate. Thiamine diphosphate is bound by residues Glu421 and Phe448. Glu421 (proton donor) is an active-site residue. His472, Asp480, and Arg531 together coordinate substrate.

It belongs to the transketolase family. As to quaternary structure, homodimer. It depends on Mg(2+) as a cofactor. Requires Ca(2+) as cofactor. Mn(2+) is required as a cofactor. Co(2+) serves as cofactor. The cofactor is thiamine diphosphate. As to expression, leaves and roots.

The catalysed reaction is D-sedoheptulose 7-phosphate + D-glyceraldehyde 3-phosphate = aldehydo-D-ribose 5-phosphate + D-xylulose 5-phosphate. Could be involved in the conversion of sugars, which are a major phenomenon in the rehydration process. Its function is as follows. Catalyzes the transfer of a two-carbon ketol group from a ketose donor to an aldose acceptor, via a covalent intermediate with the cofactor thiamine pyrophosphate. The chain is Transketolase 7 (TKT7) from Craterostigma plantagineum (Blue gem).